The primary structure comprises 391 residues: Succinate--CoA ligase [ADP-forming] subunit beta (391 aa).

In terms of domain architecture, ATP-grasp spans 9-237 (RDLFEKHGVP…RATTDPLELR (229 aa)). ATP-binding positions include lysine 46, 53–55 (GRG), alanine 95, and glutamate 100. Residues asparagine 192 and aspartate 206 each coordinate Mg(2+). Substrate is bound by residues asparagine 257 and 320–322 (GIT).

Belongs to the succinate/malate CoA ligase beta subunit family. As to quaternary structure, heterotetramer of two alpha and two beta subunits. Requires Mg(2+) as cofactor.

It catalyses the reaction succinate + ATP + CoA = succinyl-CoA + ADP + phosphate. It carries out the reaction GTP + succinate + CoA = succinyl-CoA + GDP + phosphate. The protein operates within carbohydrate metabolism; tricarboxylic acid cycle; succinate from succinyl-CoA (ligase route): step 1/1. Its function is as follows. Succinyl-CoA synthetase functions in the citric acid cycle (TCA), coupling the hydrolysis of succinyl-CoA to the synthesis of either ATP or GTP and thus represents the only step of substrate-level phosphorylation in the TCA. The beta subunit provides nucleotide specificity of the enzyme and binds the substrate succinate, while the binding sites for coenzyme A and phosphate are found in the alpha subunit. The polypeptide is Succinate--CoA ligase [ADP-forming] subunit beta (Cutibacterium acnes (strain DSM 16379 / KPA171202) (Propionibacterium acnes)).